The chain runs to 168 residues: Cofilin-1-B (168 aa).

A2 carries the post-translational modification N-acetylalanine. In terms of domain architecture, ADF-H spans 4 to 153 (GVMVSDDVVK…NDPCNLADKL (150 aa)). Positions 30 to 34 (KKRKK) match the Nuclear localization signal motif.

This sequence belongs to the actin-binding proteins ADF family. Post-translationally, inactive when phosphorylated. Phosphorylation levels vary during development. Oocytes contain only the phosphorylated form, and 80-95% of cfl1 protein is phosphorylated in unfertilized eggs. Rapid dephosphorylation occurs within 30 minutes after fertilization. Phosphorylation levels increase again between the morula and blastula stages (5-8 hpf) and then decrease again as gastrulation approaches. Dephosphorylated by pdxp. As to expression, expressed diffusely in both animal and vegetal hemispheres of the oocyte. During cleavage, expression accumulates around the cleavage furrow, along the vegetal membrane, and later in the midbody. Strongly expressed in the animal hemisphere during blastula stages, with most cells showing expression by gastrulation. By stage 17, expression is highest in cells of the developing neuroectoderm, and at stage 24 the notochord, neural tube, neural crest, somites and some cells of the archenteron show high expression. By stage 35, expression has declined in the notochord, but remains in the neural tube, epidermis and a layer of cells in the archenteron. Also highly expressed in the retina and neuronal cell bodies at the base of the cement gland but not the cement gland itself. At stage 38, expression is widespread, being highest in the nervous system and retina. In the adult, expression is high in the brain, heart, oocyte, stomach, and low in skeletal muscle.

It localises to the nucleus matrix. The protein localises to the cytoplasm. The protein resides in the cytoskeleton. Its subcellular location is the cell cortex. It is found in the membrane. Functionally, may play a role in the regulation of cell morphology and cytoskeletal organization. Binds to F-actin and exhibits pH-sensitive F-actin depolymerizing activity. Required for formation of the cleavage furrow during cytokinesis. The chain is Cofilin-1-B (cfl1-b) from Xenopus laevis (African clawed frog).